A 95-amino-acid polypeptide reads, in one-letter code: Large ribosomal subunit protein uL23 (95 aa).

This sequence belongs to the universal ribosomal protein uL23 family. As to quaternary structure, part of the 50S ribosomal subunit. Contacts protein L29, and trigger factor when it is bound to the ribosome.

Its function is as follows. One of the early assembly proteins it binds 23S rRNA. One of the proteins that surrounds the polypeptide exit tunnel on the outside of the ribosome. Forms the main docking site for trigger factor binding to the ribosome. This is Large ribosomal subunit protein uL23 from Coxiella burnetii (strain RSA 493 / Nine Mile phase I).